Here is a 127-residue protein sequence, read N- to C-terminus: Fumarate reductase subunit C (127 aa).

The next 3 helical transmembrane spans lie at 30-50, 67-87, and 107-127; these read ATVL…GSLV, IVVA…QTFF, and VVVL…LVIV.

The protein belongs to the FrdC family. As to quaternary structure, part of an enzyme complex containing four subunits: a flavoprotein (FrdA), an iron-sulfur protein (FrdB), and two hydrophobic anchor proteins (FrdC and FrdD).

Its subcellular location is the cell inner membrane. In terms of biological role, anchors the catalytic components of the fumarate reductase complex to the cell membrane, binds quinones. This Aliivibrio fischeri (strain ATCC 700601 / ES114) (Vibrio fischeri) protein is Fumarate reductase subunit C.